The chain runs to 544 residues: MEDLKPSAANSLPLTLLGFLERAATVYGDCTSIVYGNSTVYTWRETNHRCLCVASALSSIGIGRSDVVSVLSANTPEMYELQFSVPMSGAILNNINTRLDARTVSVLLRHCESKLLFVDFFYSDLAVEAITMLLNPPILVLIANEEEEEGGAEVTERSKFCYLYSDLITRGNPDFKWIRPGSEWDPIVVNYTSGTTSSPKGVVHCHRGIFVMTLDSLTDWAVPKTPVYLWTLPIFHANGWTYPWGIAAVGGTNVCVRKLHAPSIYHLIRDHGVTHMYGAPIVLQILSASQESDQPLKSPVNFLTAGSSPPATVLLRAESLGFIVSHGYGLTETAGVIVSCAWKPNWNRLPASDQAQLKSRQGVRTVGFSEIDVVDPESGRSVERDGETVGEIVLRGSSIMLGYLKNPIGTQNSFKNGWFFTGDLGVIHGDGYLEIKDRSKDVIISGGENVSSVEVEAVLYTNPAVNEAAVVARPDEFWGETPCAFVSLKPGLTRKPTDKEIIEYCKYKMPRYMAPKTVSFLEELPKTSTGKIIKSLLKEIAKNM.

It belongs to the ATP-dependent AMP-binding enzyme family. Expressed at low levels in roots, leaves, stems, flowers and developing seeds.

May act as an acid--thiol ligase that activates carboxylic acids by forming acyl-CoAs. This Arabidopsis thaliana (Mouse-ear cress) protein is Probable acyl-activating enzyme 8 (AAE8).